The sequence spans 200 residues: NADH-quinone oxidoreductase subunit C (200 aa).

Belongs to the complex I 30 kDa subunit family. As to quaternary structure, NDH-1 is composed of 14 different subunits. Subunits NuoB, C, D, E, F, and G constitute the peripheral sector of the complex.

The protein localises to the cell inner membrane. The catalysed reaction is a quinone + NADH + 5 H(+)(in) = a quinol + NAD(+) + 4 H(+)(out). Functionally, NDH-1 shuttles electrons from NADH, via FMN and iron-sulfur (Fe-S) centers, to quinones in the respiratory chain. The immediate electron acceptor for the enzyme in this species is believed to be ubiquinone. Couples the redox reaction to proton translocation (for every two electrons transferred, four hydrogen ions are translocated across the cytoplasmic membrane), and thus conserves the redox energy in a proton gradient. The sequence is that of NADH-quinone oxidoreductase subunit C from Burkholderia thailandensis (strain ATCC 700388 / DSM 13276 / CCUG 48851 / CIP 106301 / E264).